Consider the following 380-residue polypeptide: DNA replication and repair protein RecF (380 aa).

An ATP-binding site is contributed by Gly30 to Thr37.

Belongs to the RecF family.

It localises to the cytoplasm. In terms of biological role, the RecF protein is involved in DNA metabolism; it is required for DNA replication and normal SOS inducibility. RecF binds preferentially to single-stranded, linear DNA. It also seems to bind ATP. The chain is DNA replication and repair protein RecF from Mycobacterium sp. (strain KMS).